The following is a 312-amino-acid chain: Ribosomal protein L11 methyltransferase (312 aa).

S-adenosyl-L-methionine contacts are provided by threonine 160, glycine 181, aspartate 203, and asparagine 248.

Belongs to the methyltransferase superfamily. PrmA family.

It is found in the cytoplasm. The enzyme catalyses L-lysyl-[protein] + 3 S-adenosyl-L-methionine = N(6),N(6),N(6)-trimethyl-L-lysyl-[protein] + 3 S-adenosyl-L-homocysteine + 3 H(+). Functionally, methylates ribosomal protein L11. The sequence is that of Ribosomal protein L11 methyltransferase from Fusobacterium nucleatum subsp. nucleatum (strain ATCC 25586 / DSM 15643 / BCRC 10681 / CIP 101130 / JCM 8532 / KCTC 2640 / LMG 13131 / VPI 4355).